An 896-amino-acid chain; its full sequence is DNA mismatch repair protein MutS (896 aa).

599-606 (GPNMAGKS) is a binding site for ATP.

Belongs to the DNA mismatch repair MutS family.

In terms of biological role, this protein is involved in the repair of mismatches in DNA. It is possible that it carries out the mismatch recognition step. This protein has a weak ATPase activity. This chain is DNA mismatch repair protein MutS, found in Geobacillus kaustophilus (strain HTA426).